A 94-amino-acid chain; its full sequence is Co-chaperonin GroES (94 aa).

The protein belongs to the GroES chaperonin family. As to quaternary structure, heptamer of 7 subunits arranged in a ring. Interacts with the chaperonin GroEL.

The protein localises to the cytoplasm. Functionally, together with the chaperonin GroEL, plays an essential role in assisting protein folding. The GroEL-GroES system forms a nano-cage that allows encapsulation of the non-native substrate proteins and provides a physical environment optimized to promote and accelerate protein folding. GroES binds to the apical surface of the GroEL ring, thereby capping the opening of the GroEL channel. This Alkaliphilus oremlandii (strain OhILAs) (Clostridium oremlandii (strain OhILAs)) protein is Co-chaperonin GroES.